A 218-amino-acid polypeptide reads, in one-letter code: Leucine-rich repeat protein 1 (218 aa).

The signal sequence occupies residues 1–27 (MASRNYRWELFAASLTLTLALIHLVEA). LRR repeat units lie at residues 94–117 (EHLQYLELYKNNIQGTIPSELGNL), 119–140 (NLISLDLYNNNLTGIVPTSLGK), 141–165 (LKSLVFLRLNDNRLTGPIPRALTAI), and 167–190 (SLKVVDVSSNDLCGTIPTNGPFAH).

In terms of assembly, interacts with HIR1.

Involved in plant defense response. This Arabidopsis thaliana (Mouse-ear cress) protein is Leucine-rich repeat protein 1.